The chain runs to 377 residues: Histone deacetylase 8 (377 aa).

Residues 14 to 324 (LVPVYIYSPE…WTYLTGVILG (311 aa)) are histone deacetylase. Ser39 carries the phosphoserine modification. Asp101 is a binding site for substrate. The active-site Proton acceptor is His143. Position 151 (Gly151) interacts with substrate. Residues Asp178, His180, and Asp267 each contribute to the a divalent metal cation site. Tyr306 contacts substrate.

The protein belongs to the histone deacetylase family. HD type 1 subfamily. Interacts with PEPB2-MYH11, a fusion protein consisting of the 165 N-terminal residues of CBF-beta (PEPB2) with the tail region of MYH11 produced by the inversion Inv(16)(p13q22), a translocation associated with acute myeloid leukemia of M4EO subtype. The PEPB2-MYH1 fusion protein also interacts with RUNX1, a well known transcriptional regulator, suggesting that the interaction with HDAC8 may participate in the conversion of RUNX1 into a constitutive transcriptional repressor. Interacts with CBFA2T3. Interacts with phosphorylated SMG5/EST1B; this interaction protects SMG5 from ubiquitin-mediated degradation. Associates with alpha-SMA (smooth muscle alpha-actin). A divalent metal cation serves as cofactor. Phosphorylated by PKA on serine 39. Phosphorylation reduces deacetylase activity observed preferentially on histones H3 and H4. Weakly expressed in most tissues. Expressed at higher level in heart, brain, kidney and pancreas and also in liver, lung, placenta, prostate and kidney.

The protein localises to the nucleus. Its subcellular location is the chromosome. It localises to the cytoplasm. It catalyses the reaction N(6)-acetyl-L-lysyl-[histone] + H2O = L-lysyl-[histone] + acetate. It carries out the reaction N(6)-acetyl-L-lysyl-[protein] + H2O = L-lysyl-[protein] + acetate. The enzyme catalyses N(6)-(2E)-butenoyl-L-lysyl-[protein] + H2O = (2E)-2-butenoate + L-lysyl-[protein]. Its activity is regulated as follows. Its activity is inhibited by trichostatin A (TSA), suberoylanilide hydroxamic acid (SAHA), 3-(1-methyl-4-phenylacetyl-1H-2-pyrrolyl)-N-hydroxy-2-propenamide (APHA), 4-dimethylamino-N-(6-hydroxycarbamoyethyl)benzamide-N-hydroxy-7-(4-dimethylaminobenzoyl)aminoheptanamide (MS-344), 5-(4-methyl-benzoylamino)-biphenyl-3,4'-dicarboxylic acid 3-dimethylamide 4'-hydroxyamide (CRA-A) and butyrate. Histone deacetylase that catalyzes the deacetylation of lysine residues on the N-terminal part of the core histones (H2A, H2B, H3 and H4). Histone deacetylation gives a tag for epigenetic repression and plays an important role in transcriptional regulation, cell cycle progression and developmental events. Histone deacetylases act via the formation of large multiprotein complexes. Also involved in the deacetylation of cohesin complex protein SMC3 regulating release of cohesin complexes from chromatin. May play a role in smooth muscle cell contractility. In addition to protein deacetylase activity, also has protein-lysine deacylase activity: acts as a protein decrotonylase by mediating decrotonylation ((2E)-butenoyl) of histones. The sequence is that of Histone deacetylase 8 from Homo sapiens (Human).